The sequence spans 364 residues: Valine dehydrogenase (364 aa).

Lys-91 is a catalytic residue. NAD(+) is bound at residue 191 to 197 (GVGKVGH).

Belongs to the Glu/Leu/Phe/Val dehydrogenases family. As to quaternary structure, homodimer.

The protein resides in the cytoplasm. The catalysed reaction is L-valine + NAD(+) + H2O = 3-methyl-2-oxobutanoate + NH4(+) + NADH + H(+). Its pathway is amino-acid degradation; L-valine degradation. With respect to regulation, repressed in minimal medium by the presence of glucose and NH4(+), glycerol and NH4(+), or glycerol and asparagine. In terms of biological role, oxidative deamination of branched-chain amino acids. Oxidizes L-valine and L-alpha-aminobutyric acid efficiently, and L-isoleucine and L-leucine less efficiently. Does not act on D-valine. The catabolism of L-valine is the major source of fatty acid precursors for macrolide biosynthesis and a vital source of antibiotic precursors. Uses NAD; no activity was found with NADP. This is Valine dehydrogenase (vdh) from Streptomyces coelicolor (strain ATCC BAA-471 / A3(2) / M145).